The sequence spans 180 residues: Stathmin-3 (180 aa).

2 S-palmitoyl cysteine lipidation sites follow: C22 and C24. Residues 38 to 180 (GDMEVKQLDK…NKEQREEMSG (143 aa)) enclose the SLD domain. Residues S50, S60, S65, S68, S72, S73, and S81 each carry the phosphoserine modification. The tract at residues 58–81 (LKSPSDLSPESPVLSSPPKRKDAS) is disordered. The span at 60–74 (SPSDLSPESPVLSSP) shows a compositional bias: low complexity. Residues 75-179 (PKRKDASLEE…RNKEQREEMS (105 aa)) adopt a coiled-coil conformation.

It belongs to the stathmin family. Interacts with STAT3. Interacts with CLU (secreted form); this interaction may act as an important modulator during neuronal differentiation. In terms of processing, N-terminal palmitoylation promotes specific anchoring to the cytosolic leaflet of Golgi membranes and subsequent vesicular trafficking along dendrites and axons. Neuronal Stathmins are substrates for palmitoyltransferases ZDHHC3, ZDHHC7 and ZDHHC15. In terms of tissue distribution, neuron specific.

The protein localises to the golgi apparatus. Its subcellular location is the cell projection. It is found in the growth cone. The protein resides in the axon. It localises to the cytoplasm. The protein localises to the cytosol. Functionally, exhibits microtubule-destabilizing activity, which is antagonized by STAT3. The chain is Stathmin-3 (Stmn3) from Rattus norvegicus (Rat).